The chain runs to 655 residues: p-hydroxybenzoic acid efflux pump subunit AaeB (655 aa).

Helical transmembrane passes span 13–33 (FAVK…HFQL), 38–58 (WAVL…GGEP), 69–89 (LRII…ISMI), 93–113 (LLMI…SSLV), 121–141 (WGLS…EPLL), 152–172 (EIVI…PRSI), 370–390 (LFWL…IAVV), 407–427 (FIYG…VIIP), 431–451 (QSML…GIEV), 459–479 (MGAL…TFHF), and 482–502 (FLDS…VILL).

The protein belongs to the aromatic acid exporter ArAE (TC 2.A.85) family.

The protein localises to the cell inner membrane. Its function is as follows. Forms an efflux pump with AaeA. Could function as a metabolic relief valve, allowing to eliminate certain compounds when they accumulate to high levels in the cell. The sequence is that of p-hydroxybenzoic acid efflux pump subunit AaeB from Salmonella agona (strain SL483).